Reading from the N-terminus, the 424-residue chain is COUP transcription factor 1 (424 aa).

The disordered stretch occupies residues 1-82 (MAMVVSSWRD…QGPPGSGQSQ (82 aa)). Over residues 39–68 (EQQQQQAGSGAPHTPQTPGQPGAPATPGTA) the composition is skewed to low complexity. A DNA-binding region (nuclear receptor) is located at residues 84-159 (HIECVVCGDK…VGMRREAVQR (76 aa)). 2 consecutive NR C4-type zinc fingers follow at residues 87-107 (CVVC…CEGC) and 123-147 (CRAN…LKKC). One can recognise an NR LBD domain in the interval 185–411 (YLSGYISLLL…TLIRDMLLSG (227 aa)).

This sequence belongs to the nuclear hormone receptor family. NR2 subfamily. As to quaternary structure, binds DNA as dimer; homodimer and probable heterodimer with NR2F6. Interacts with GTF2B; this interaction is direct. Interacts with COPS2.

The protein localises to the nucleus. In terms of biological role, coup (chicken ovalbumin upstream promoter) transcription factor binds to the ovalbumin promoter and, in conjunction with another protein (S300-II) stimulates initiation of transcription. Binds to both direct repeats and palindromes of the 5'-AGGTCA-3' motif. Represses transcriptional activity of LHCG. The protein is COUP transcription factor 1 (NR2F1) of Bos taurus (Bovine).